Here is a 237-residue protein sequence, read N- to C-terminus: Dihydroceramide fatty acyl 2-hydroxylase FAH2 (237 aa).

2 consecutive transmembrane segments (helical) span residues 54–74 (VWWAIPTIWLPVVCYVLSISA) and 77–97 (GLTFPQIGLIVAFGVLTWTLL). H102, H107, H123, H126, and H127 together coordinate Zn(2+). Transmembrane regions (helical) follow at residues 134–154 (LRLVFPPTATAILLVPLWKLL) and 156–176 (LLATPATAPAILGGILFGYVM). Residues H181, H185, H201, H204, and H205 each coordinate Zn(2+).

Belongs to the sterol desaturase family. In terms of assembly, interacts with CYTB5-A, CYTB5-B, CYTB5-C and CYTB5-D. Zn(2+) serves as cofactor. As to expression, expressed in leaves, roots, flowers and seeds.

The protein localises to the endoplasmic reticulum membrane. The enzyme catalyses an N-(1,2-saturated acyl)sphinganine + 2 Fe(II)-[cytochrome b5] + O2 + 2 H(+) = an N-[(2'R)-hydroxyacyl]sphinganine + 2 Fe(III)-[cytochrome b5] + H2O. In terms of biological role, fatty acid 2-hydroxylase involved in the alpha-hydroxylation of the long-chain fatty acid (LCFA) palmitic acid. Probably involved in the resistance response to oxidative stress. This is Dihydroceramide fatty acyl 2-hydroxylase FAH2 from Arabidopsis thaliana (Mouse-ear cress).